An 829-amino-acid polypeptide reads, in one-letter code: Leucine--tRNA ligase (829 aa).

A 'HIGH' region motif is present at residues 34–44 (PYPSGNIHMGH). The 'KMSKS' region signature appears at 591-595 (KMSKS). K594 is a binding site for ATP.

The protein belongs to the class-I aminoacyl-tRNA synthetase family.

The protein resides in the cytoplasm. It catalyses the reaction tRNA(Leu) + L-leucine + ATP = L-leucyl-tRNA(Leu) + AMP + diphosphate. This is Leucine--tRNA ligase from Ehrlichia chaffeensis (strain ATCC CRL-10679 / Arkansas).